The following is a 563-amino-acid chain: Arginine--tRNA ligase (563 aa).

The short motif at 121–131 (PNIAKPFSIGH) is the 'HIGH' region element.

This sequence belongs to the class-I aminoacyl-tRNA synthetase family. In terms of assembly, monomer.

Its subcellular location is the cytoplasm. The catalysed reaction is tRNA(Arg) + L-arginine + ATP = L-arginyl-tRNA(Arg) + AMP + diphosphate. This is Arginine--tRNA ligase from Streptococcus pyogenes serotype M6 (strain ATCC BAA-946 / MGAS10394).